The chain runs to 725 residues: Ribonuclease R (725 aa).

The 329-residue stretch at 264–592 (RQDLTDLAFV…IHRLLWMHLF (329 aa)) folds into the RNB domain. The S1 motif domain maps to 644 to 725 (GKTFSGFISA…IQKRAILTLI (82 aa)).

Belongs to the RNR ribonuclease family. RNase R subfamily.

The protein resides in the cytoplasm. It catalyses the reaction Exonucleolytic cleavage in the 3'- to 5'-direction to yield nucleoside 5'-phosphates.. Functionally, 3'-5' exoribonuclease that releases 5'-nucleoside monophosphates and is involved in maturation of structured RNAs. In Mycoplasma genitalium (strain ATCC 33530 / DSM 19775 / NCTC 10195 / G37) (Mycoplasmoides genitalium), this protein is Ribonuclease R.